Here is a 275-residue protein sequence, read N- to C-terminus: Monooxygenase af470 (275 aa).

The catalysed reaction is prefumagillin + NADPH + 2 O2 = fumagillin + acetaldehyde + NADP(+) + H2O. The protein operates within secondary metabolite biosynthesis; terpenoid biosynthesis. Its function is as follows. Monooxygenase; part of the gene cluster that mediates the biosynthesis of fumagillin, a meroterpenoid that has numerous biological activities including irreversible inhibition of human type 2 methionine aminopeptidase (METAP2). Within the pathway, the monooxygenase af470 catalyzes the oxidative cleavage of prefumagillin to yield the final compound of the pathway, fumagillin. The pathway begins with the conversion of farnesyl pyrophosphate (FPP) to beta-trans-bergamotene by the membrane-bound beta-trans-bergamotene synthase af520. The multifunctional cytochrome P450 monooxygenase af510 then converts beta-trans-bergamotene into 5-keto-demethoxyfumagillol via several oxydation steps. 5-keto-demethoxyfumagillol is then subjected to successive C-6 hydroxylation and O-methylation by the dioxygenase af480 and O-methyltransferase af390-400, respectively, to yield 5-keto-fumagillol, which is then stereoselectively reduced by the keto-reductase af490 to 5R-hydroxy-seco-sesquiterpene. The next step is the polyketide transferase af380-catalyzed transfer of a dodecapentaenoyl group synthesized by the polyketide synthase af370 onto 5R-hydroxy-seco-sesquiterpene which leads to the production of prefumagillin. Finally, oxidative cleavage by the monooxygenase af470 converts prefumagillin to fumagillin. This Aspergillus fumigatus (strain ATCC MYA-4609 / CBS 101355 / FGSC A1100 / Af293) (Neosartorya fumigata) protein is Monooxygenase af470.